The chain runs to 144 residues: Deoxyuridine 5'-triphosphate nucleotidohydrolase (144 aa).

Residues 63 to 65 (RSG), Asn76, and 80 to 82 (TID) contribute to the substrate site.

It belongs to the dUTPase family. It depends on Mg(2+) as a cofactor.

The enzyme catalyses dUTP + H2O = dUMP + diphosphate + H(+). It functions in the pathway pyrimidine metabolism; dUMP biosynthesis; dUMP from dCTP (dUTP route): step 2/2. In terms of biological role, this enzyme is involved in nucleotide metabolism: it produces dUMP, the immediate precursor of thymidine nucleotides and it decreases the intracellular concentration of dUTP so that uracil cannot be incorporated into DNA. The chain is Deoxyuridine 5'-triphosphate nucleotidohydrolase from Porphyromonas gingivalis (strain ATCC 33277 / DSM 20709 / CIP 103683 / JCM 12257 / NCTC 11834 / 2561).